We begin with the raw amino-acid sequence, 279 residues long: HTH-type transcriptional regulator HdfR (279 aa).

An HTH lysR-type domain is found at Met1 to Thr58. The H-T-H motif DNA-binding region spans Phe18–Arg37.

Belongs to the LysR transcriptional regulatory family.

Its function is as follows. Negatively regulates the transcription of the flagellar master operon flhDC by binding to the upstream region of the operon. This chain is HTH-type transcriptional regulator HdfR, found in Escherichia coli (strain SE11).